Reading from the N-terminus, the 136-residue chain is MAKSDVKGVNLGMGTGRRKSSVARVYIREGKGDIKINHKNFDVYMQLEKLKTIALSPLALTHTLGKYDIYINVYGGGISGQAGAIRHGIARALFDLDEEYKMVLKSNGFLTRDSRKVERKKFGKKKARKSFQFSKR.

The protein belongs to the universal ribosomal protein uS9 family.

The protein is Small ribosomal subunit protein uS9 of Borrelia duttonii (strain Ly).